The following is a 193-amino-acid chain: Pilin-like protein PilA2 (193 aa).

Positions Met1–Gly4 are cleaved as a propeptide — leader sequence. N-methylleucine is present on Leu5. Residues Leu5–Leu25 traverse the membrane as a helical segment.

Its subcellular location is the cell inner membrane. It is found in the cell outer membrane. It localises to the periplasm. Its function is as follows. Plays an essential role in natural DNA transformation but is not required for pilus biogenesis. This is Pilin-like protein PilA2 (pilA2) from Thermus thermophilus (strain ATCC BAA-163 / DSM 7039 / HB27).